Here is a 331-residue protein sequence, read N- to C-terminus: Cathepsin S (331 aa).

The first 16 residues, 1–16 (MKRLVCVLLVCSSAVA), serve as a signal peptide directing secretion. The propeptide at 17–114 (QLHKDPTLDH…ITYKSNPNRI (98 aa)) is activation peptide. The N-linked (GlcNAc...) asparagine glycan is linked to asparagine 104. 4 disulfide bridges follow: cysteine 126–cysteine 224, cysteine 136–cysteine 180, cysteine 170–cysteine 213, and cysteine 272–cysteine 320. Cysteine 139 is a catalytic residue. Active-site residues include histidine 278 and asparagine 298.

It belongs to the peptidase C1 family. Monomer.

The protein localises to the lysosome. It localises to the secreted. The protein resides in the cytoplasmic vesicle. Its subcellular location is the phagosome. The catalysed reaction is Similar to cathepsin L, but with much less activity on Z-Phe-Arg-|-NHMec, and more activity on the Z-Val-Val-Arg-|-Xaa compound.. Thiol protease. Key protease responsible for the removal of the invariant chain from MHC class II molecules and MHC class II antigen presentation. The bond-specificity of this proteinase is in part similar to the specificities of cathepsin L. The sequence is that of Cathepsin S (CTSS) from Homo sapiens (Human).